A 100-amino-acid polypeptide reads, in one-letter code: MAKKSMIEREKKRARLVEKYAAKREALKEAFHQAEDYEEKIEIHRQLQQLPRNSSPNRRRNRCWATGRPRGYYRDFGLSRNVLREWAHEGLLPGVVKSSW.

It belongs to the universal ribosomal protein uS14 family. As to quaternary structure, part of the 30S ribosomal subunit. Contacts proteins S3 and S10.

Functionally, binds 16S rRNA, required for the assembly of 30S particles and may also be responsible for determining the conformation of the 16S rRNA at the A site. The chain is Small ribosomal subunit protein uS14 from Rippkaea orientalis (strain PCC 8801 / RF-1) (Cyanothece sp. (strain PCC 8801)).